We begin with the raw amino-acid sequence, 238 residues long: Ribonuclease PH (238 aa).

Phosphate contacts are provided by residues Arg86 and 124-126 (GTR).

The protein belongs to the RNase PH family. Homohexameric ring arranged as a trimer of dimers.

The enzyme catalyses tRNA(n+1) + phosphate = tRNA(n) + a ribonucleoside 5'-diphosphate. Its function is as follows. Phosphorolytic 3'-5' exoribonuclease that plays an important role in tRNA 3'-end maturation. Removes nucleotide residues following the 3'-CCA terminus of tRNAs; can also add nucleotides to the ends of RNA molecules by using nucleoside diphosphates as substrates, but this may not be physiologically important. Probably plays a role in initiation of 16S rRNA degradation (leading to ribosome degradation) during starvation. The polypeptide is Ribonuclease PH (Psychrobacter arcticus (strain DSM 17307 / VKM B-2377 / 273-4)).